We begin with the raw amino-acid sequence, 93 residues long: Small ribosomal subunit protein bS18 (93 aa).

This sequence belongs to the bacterial ribosomal protein bS18 family. Part of the 30S ribosomal subunit. Forms a tight heterodimer with protein bS6.

Binds as a heterodimer with protein bS6 to the central domain of the 16S rRNA, where it helps stabilize the platform of the 30S subunit. The polypeptide is Small ribosomal subunit protein bS18 (Delftia acidovorans (strain DSM 14801 / SPH-1)).